Consider the following 480-residue polypeptide: Protein nucleotidyltransferase YdiU (480 aa).

Residues Gly-86, Gly-88, Arg-89, Lys-109, Asp-121, Gly-122, Arg-172, and Arg-179 each coordinate ATP. Asp-248 (proton acceptor) is an active-site residue. 2 residues coordinate Mg(2+): Asn-249 and Asp-258. Asp-258 contacts ATP.

The protein belongs to the SELO family. Mg(2+) is required as a cofactor. Requires Mn(2+) as cofactor.

The enzyme catalyses L-seryl-[protein] + ATP = 3-O-(5'-adenylyl)-L-seryl-[protein] + diphosphate. It carries out the reaction L-threonyl-[protein] + ATP = 3-O-(5'-adenylyl)-L-threonyl-[protein] + diphosphate. It catalyses the reaction L-tyrosyl-[protein] + ATP = O-(5'-adenylyl)-L-tyrosyl-[protein] + diphosphate. The catalysed reaction is L-histidyl-[protein] + UTP = N(tele)-(5'-uridylyl)-L-histidyl-[protein] + diphosphate. The enzyme catalyses L-seryl-[protein] + UTP = O-(5'-uridylyl)-L-seryl-[protein] + diphosphate. It carries out the reaction L-tyrosyl-[protein] + UTP = O-(5'-uridylyl)-L-tyrosyl-[protein] + diphosphate. Its function is as follows. Nucleotidyltransferase involved in the post-translational modification of proteins. It can catalyze the addition of adenosine monophosphate (AMP) or uridine monophosphate (UMP) to a protein, resulting in modifications known as AMPylation and UMPylation. This chain is Protein nucleotidyltransferase YdiU, found in Enterobacter sp. (strain 638).